Consider the following 1108-residue polypeptide: Transmembrane protein 132C (1108 aa).

Positions 1-27 (MRSEGAAPGPAAPLCGALSLLLGALLG) are cleaved as a signal peptide. Residues 28-922 (KVIEGHGVTD…LVQTPRGLSD (895 aa)) are Extracellular-facing. Residues asparagine 316 and asparagine 373 are each glycosylated (N-linked (GlcNAc...) asparagine). Residues 820–836 (HASDRRQKGQHHERTGQ) are compositionally biased toward basic and acidic residues. A disordered region spans residues 820–857 (HASDRRQKGQHHERTGQDGHLYGSSPVEREEGALRRAT). Residues 923–943 (LEIGMYALLGVFCLAILVFLI) traverse the membrane as a helical segment. Residues 944-1108 (NCATFALKYR…NYLEKLKDKA (165 aa)) are Cytoplasmic-facing. A disordered region spans residues 1022 to 1072 (QSQIHRSADSGGRQGREQKQDPLHSPTSKRKKVKFTTFTTIPPDDSCPTVN).

The protein belongs to the TMEM132 family.

It localises to the membrane. This Homo sapiens (Human) protein is Transmembrane protein 132C (TMEM132C).